The primary structure comprises 205 residues: High frequency lysogenization protein HflD homolog (205 aa).

The protein belongs to the HflD family.

It is found in the cytoplasm. Its subcellular location is the cell inner membrane. The protein is High frequency lysogenization protein HflD homolog of Shewanella pealeana (strain ATCC 700345 / ANG-SQ1).